A 252-amino-acid polypeptide reads, in one-letter code: Putative hydro-lyase OB3382 (252 aa).

The protein belongs to the D-glutamate cyclase family.

The sequence is that of Putative hydro-lyase OB3382 from Oceanobacillus iheyensis (strain DSM 14371 / CIP 107618 / JCM 11309 / KCTC 3954 / HTE831).